The chain runs to 259 residues: Ribosomal RNA large subunit methyltransferase E (259 aa).

S-adenosyl-L-methionine is bound by residues Gly-49, Trp-51, Asp-69, Asp-88, and Asp-112. Lys-152 functions as the Proton acceptor in the catalytic mechanism. The TRAM domain maps to 199–257; sequence PIAEGDEHTVEIVDTGDEGDGIARIEGYTLFVDDAAEGDTVDVTVTDLKPNYGFAERRD.

Belongs to the class I-like SAM-binding methyltransferase superfamily. RNA methyltransferase RlmE family.

The protein localises to the cytoplasm. The catalysed reaction is uridine(2552) in 23S rRNA + S-adenosyl-L-methionine = 2'-O-methyluridine(2552) in 23S rRNA + S-adenosyl-L-homocysteine + H(+). Specifically methylates the uridine in position 2552 of 23S rRNA at the 2'-O position of the ribose in the fully assembled 50S ribosomal subunit. The polypeptide is Ribosomal RNA large subunit methyltransferase E (Halobacterium salinarum (strain ATCC 29341 / DSM 671 / R1)).